The chain runs to 326 residues: Type II secretion system protein K (326 aa).

Positions 1 to 7 (MNHRQRG) are cleaved as a propeptide — leader sequence. Residues 8 to 28 (IALLMVLLILALMMVLASAMT) form a helical membrane-spanning segment. The Periplasmic portion of the chain corresponds to 29-326 (ERSARMYQQT…RYGIYWVADE (298 aa)).

It belongs to the GSP K family. In terms of assembly, type II secretion is composed of four main components: the outer membrane complex, the inner membrane complex, the cytoplasmic secretion ATPase and the periplasm-spanning pseudopilus. Interacts with core component PulG. In terms of processing, cleaved by prepilin peptidase.

Its subcellular location is the cell inner membrane. In terms of biological role, component of the type II secretion system required for the energy-dependent secretion of extracellular factors such as proteases and toxins from the periplasm. Plays a role in pseudopilus assembly and seems to control its length. Interacts with the pseudopilus tip complex that is critical for the recognition and binding of secretion substrates. The polypeptide is Type II secretion system protein K (pulK) (Klebsiella pneumoniae).